The following is a 397-amino-acid chain: MEVEIRLGSVRYPFRLGTDCLGAIVEDLVAMSASRLLIVCDSNTGPLFGAELVERLSPRVPANLLIHRAGEPYKDLQAVGTLADSALQLGADRASVVVAVGGGVIGNIAGLMAALLFRGIRLVHIPTSLIAMSDSVLSLKQAVNACVGKNLMGTFYAPESVLADTAMLRSLPFRETVSGLCEVVKNSLAIRPSMVEMLRTSLRQDAVYDDETMYEIISESILAKASVTVDDMHECRAGLVLEYGHTVGHAIEYTAAGGLSHGQAIGLGMVVAAEVSHRLGHLDQEAVALHRELLTRAGAMVTIPEEVDLDEVMHRLRFDNKRGYLADPAESSAMVLLGGLGEPLWHDGRPLVSVPMALVGEVVNEIARPEIPNFELVAPVETVEEGRVPDTVGAADG.

NAD(+) is bound by residues aspartate 41, 71–74 (EPYK), 103–107 (GVIGN), 127–128 (TS), 138–140 (SLK), and 149–150 (KN). Residue lysine 140 is part of the active site. Glutamate 182 is a Co(2+) binding site. Glutamate 242 is a catalytic residue. Residues histidine 245 and histidine 261 each coordinate Co(2+).

It belongs to the sugar phosphate cyclases superfamily. DOI synthase family. NAD(+) is required as a cofactor. Co(2+) serves as cofactor.

The enzyme catalyses D-glucose 6-phosphate = 2-deoxy-L-scyllo-inosose + phosphate. It participates in metabolic intermediate biosynthesis; 2-deoxystreptamine biosynthesis; 2-deoxystreptamine from D-glucose 6-phosphate: step 1/4. It functions in the pathway antibiotic biosynthesis; gentamicin biosynthesis. In terms of biological role, catalyzes the intramolecular carbocycle formation from D-glucose-6-phosphate to 2-deoxy-scyllo-inosose (DOI). The sequence is that of 2-deoxy-scyllo-inosose synthase (gtmA) from Micromonospora echinospora (Micromonospora purpurea).